Here is a 437-residue protein sequence, read N- to C-terminus: Serine hydroxymethyltransferase (437 aa).

(6S)-5,6,7,8-tetrahydrofolate is bound by residues L130 and G134–L136. At K239 the chain carries N6-(pyridoxal phosphate)lysine. T363 to F365 serves as a coordination point for (6S)-5,6,7,8-tetrahydrofolate.

This sequence belongs to the SHMT family. Homodimer. The cofactor is pyridoxal 5'-phosphate.

The protein localises to the cytoplasm. The catalysed reaction is (6R)-5,10-methylene-5,6,7,8-tetrahydrofolate + glycine + H2O = (6S)-5,6,7,8-tetrahydrofolate + L-serine. It participates in one-carbon metabolism; tetrahydrofolate interconversion. Its pathway is amino-acid biosynthesis; glycine biosynthesis; glycine from L-serine: step 1/1. Functionally, catalyzes the reversible interconversion of serine and glycine with tetrahydrofolate (THF) serving as the one-carbon carrier. This reaction serves as the major source of one-carbon groups required for the biosynthesis of purines, thymidylate, methionine, and other important biomolecules. Also exhibits THF-independent aldolase activity toward beta-hydroxyamino acids, producing glycine and aldehydes, via a retro-aldol mechanism. This Bartonella henselae (strain ATCC 49882 / DSM 28221 / CCUG 30454 / Houston 1) (Rochalimaea henselae) protein is Serine hydroxymethyltransferase.